Here is a 61-residue protein sequence, read N- to C-terminus: Large ribosomal subunit protein uL30 (61 aa).

Belongs to the universal ribosomal protein uL30 family. Part of the 50S ribosomal subunit.

The chain is Large ribosomal subunit protein uL30 from Shewanella halifaxensis (strain HAW-EB4).